A 265-amino-acid chain; its full sequence is 5'-nucleotidase SurE (265 aa).

Residues aspartate 8, aspartate 9, serine 39, and asparagine 96 each coordinate a divalent metal cation.

The protein belongs to the SurE nucleotidase family. Requires a divalent metal cation as cofactor.

Its subcellular location is the cytoplasm. It catalyses the reaction a ribonucleoside 5'-phosphate + H2O = a ribonucleoside + phosphate. Functionally, nucleotidase that shows phosphatase activity on nucleoside 5'-monophosphates. In Rubrobacter xylanophilus (strain DSM 9941 / JCM 11954 / NBRC 16129 / PRD-1), this protein is 5'-nucleotidase SurE.